We begin with the raw amino-acid sequence, 85 residues long: Large ribosomal subunit protein bL27 (85 aa).

Over residues 1–10 (MAQKKGGGST) the composition is skewed to gly residues. Residues 1–20 (MAQKKGGGSTRNGRDSKPKM) are disordered.

The protein belongs to the bacterial ribosomal protein bL27 family.

This is Large ribosomal subunit protein bL27 from Acidovorax ebreus (strain TPSY) (Diaphorobacter sp. (strain TPSY)).